We begin with the raw amino-acid sequence, 410 residues long: Ribulose bisphosphate carboxylase large chain (410 aa).

Asn-100 and Thr-150 together coordinate substrate. Residue Lys-152 is the Proton acceptor of the active site. Substrate is bound at residue Lys-154. Mg(2+) is bound by residues Lys-178, Asp-180, and Glu-181. Residue Lys-178 is modified to N6-carboxylysine. Residue His-271 is the Proton acceptor of the active site. Substrate contacts are provided by Arg-272, His-304, and Ser-356.

It belongs to the RuBisCO large chain family. Type I subfamily. In terms of assembly, heterohexadecamer of 8 large chains and 8 small chains; disulfide-linked. The disulfide link is formed within the large subunit homodimers. It depends on Mg(2+) as a cofactor. In terms of processing, the disulfide bond which can form in the large chain dimeric partners within the hexadecamer appears to be associated with oxidative stress and protein turnover.

The protein resides in the plastid. It localises to the chloroplast. It carries out the reaction 2 (2R)-3-phosphoglycerate + 2 H(+) = D-ribulose 1,5-bisphosphate + CO2 + H2O. It catalyses the reaction D-ribulose 1,5-bisphosphate + O2 = 2-phosphoglycolate + (2R)-3-phosphoglycerate + 2 H(+). RuBisCO catalyzes two reactions: the carboxylation of D-ribulose 1,5-bisphosphate, the primary event in carbon dioxide fixation, as well as the oxidative fragmentation of the pentose substrate in the photorespiration process. Both reactions occur simultaneously and in competition at the same active site. The polypeptide is Ribulose bisphosphate carboxylase large chain (rbcL) (Gleichenia japonica (Urajiro)).